Consider the following 347-residue polypeptide: sn-1 oleoyl-lipid 12-desaturase (347 aa).

A run of 2 helical transmembrane segments spans residues 41–63 and 67–85; these read AWSR…AIAP and LLPV…FVIG. Residues 86-90 carry the Histidine box-1 motif; it reads HDCGH. The helical transmembrane segment at 98–118 threads the bilayer; that stretch reads WVNNLVGHLAFLPLIYPFHSW. The short motif at 122-126 is the Histidine box-2 element; the sequence is HNHHH. Helical transmembrane passes span 164-184, 196-216, and 218-238; these read LWWL…FAFE, LFVI…LGVW, and VVKF…TFTL. Positions 286–290 match the Histidine box-3 motif; the sequence is HHLST.

The protein belongs to the fatty acid desaturase type 2 family. It depends on Fe(2+) as a cofactor.

It localises to the membrane. It catalyses the reaction a 1-[(9Z)-octadecenoyl]-2-acyl-glycerolipid + 2 reduced [2Fe-2S]-[ferredoxin] + O2 + 2 H(+) = a 1-[(9Z,12Z)-octadecdienoyl]-2-acyl-glycerolipid + 2 oxidized [2Fe-2S]-[ferredoxin] + 2 H2O. It participates in lipid metabolism; polyunsaturated fatty acid biosynthesis. Its function is as follows. Desaturase involved in fatty acid biosynthesis. Introduces a double bond at carbon 12 of oleoyl groups (18:1) attached to the sn-1 position of the glycerol moiety of membrane glycerolipids. Can also efficiently catalyze the desaturation of palmitoleic acid (16:1) in vitro. This is sn-1 oleoyl-lipid 12-desaturase from Picosynechococcus sp. (strain ATCC 27264 / PCC 7002 / PR-6) (Agmenellum quadruplicatum).